A 359-amino-acid chain; its full sequence is Protein mab-21-like 2 (359 aa).

This sequence belongs to the mab-21 family.

It localises to the nucleus. The protein localises to the cytoplasm. Its function is as follows. Required for eye morphogenesis. May promote the survival of proliferating retinal progenitor cells. The sequence is that of Protein mab-21-like 2 (mab21l2) from Danio rerio (Zebrafish).